A 211-amino-acid polypeptide reads, in one-letter code: Claudin-13 (211 aa).

At 1–8 the chain is on the cytoplasmic side; sequence MVVSKQEA. A helical membrane pass occupies residues 9-29; sequence ISFSVTSLGWVGAIVSCVLPV. The Extracellular segment spans residues 30-80; the sequence is WRVTFPDDETDPDATIWEGLWHICQVRENRWIQCTLYDTRILVAQDIKVSR. Residues 81–101 form a helical membrane-spanning segment; that stretch reads VFMVICTIGTWLGLLLCVLGD. Residues 102–118 lie on the Cytoplasmic side of the membrane; sequence WRINCFMNFTIEENLLK. A helical membrane pass occupies residues 119-139; sequence VAGGMFLSVGLLMLVPLSWVT. Residues 140–165 are Extracellular-facing; the sequence is HNIIHGFFNPLLGFSKKVQMGSSLSL. Residues 166-186 form a helical membrane-spanning segment; sequence AWTSSLLLLLGGILLCVNIPV. The Cytoplasmic segment spans residues 187–211; sequence CRDFPRCIETPSARPSGANNDTLDV.

This sequence belongs to the claudin family.

It is found in the cell junction. It localises to the tight junction. The protein localises to the cell membrane. Plays a major role in tight junction-specific obliteration of the intercellular space, through calcium-independent cell-adhesion activity. The sequence is that of Claudin-13 (Cldn13) from Mus musculus (Mouse).